Consider the following 538-residue polypeptide: Calcium-dependent protein kinase 3 (538 aa).

Positions 23-70 (PKKSIERIKKKKDSNKSIKSQHKFEGSKISNKNNELKDVKSKDPKNYE) are disordered. The span at 56 to 68 (NELKDVKSKDPKN) shows a compositional bias: basic and acidic residues. The 256-residue stretch at 112-367 (NLSEEPLGKG…ASEALKHPWF (256 aa)) folds into the Protein kinase domain. ATP-binding positions include 118-126 (LGKGTYGCV) and Lys141. Catalysis depends on Asp232, which acts as the Proton acceptor. Positions 387 to 395 (NFKNYALLL) match the J domain autoinhibitory motif motif. Positions 387–422 (NFKNYALLLKLQKLAMTIIAQQSNDYDLQQLKAVFL) are j domain. Residues 396 to 405 (KLQKLAMTII) carry the J domain EF-hand interaction motif motif. EF-hand domains follow at residues 412 to 447 (YDLQQLKAVFLYLDEDGKGNITKNQLKKGLENSGLK), 450 to 481 (QNFDVLLDQIDSDGSGRIDYTEFLAAALDRKH), and 482 to 517 (LSKKLIYCAFRVFDVDNDGEITTAELAHVTFFVILF). Asp460, Asp462, Ser464, Arg466, Glu471, Asp495, Asp497, Asp499, Glu501, and Glu506 together coordinate Ca(2+).

The protein belongs to the protein kinase superfamily. Ser/Thr protein kinase family. CDPK subfamily. The cofactor is Mg(2+).

It is found in the cytoplasm. It catalyses the reaction L-seryl-[protein] + ATP = O-phospho-L-seryl-[protein] + ADP + H(+). The catalysed reaction is L-threonyl-[protein] + ATP = O-phospho-L-threonyl-[protein] + ADP + H(+). Activated by calcium. Upon calcium binding to the EF-hand domain 2, the C-terminus of the junction domain (J domain) undergoes a conformational change which results in the dissociation of the pseudo-substrate inhibitory motif from the catalytic domain. This, in turn, may facilitate the autophosphorylation of the activation loop at Thr-273, which leads to the kinase activation. Calcium-dependent protein kinase which acts as a sensor and effector of intracellular Ca(2+) levels probably in part downstream of cGMP-activated PKG kinase. In the mosquito midgut, regulates the gliding motility of the ookinete which is essential for the ookinete to invade the midgut epithelium. However, another study showed that while required for ookinete invasion of the midgut epithelium, is not required for ookinete gliding motility. This chain is Calcium-dependent protein kinase 3, found in Plasmodium yoelii yoelii.